Reading from the N-terminus, the 616-residue chain is Sulfite reductase [NADPH] flavoprotein alpha-component (616 aa).

The Flavodoxin-like domain maps to 80–218 (LTIIFASQTG…SAAQWRKQAL (139 aa)). Residues 86 to 91 (SQTGNA), 133 to 136 (STNG), and 169 to 178 (LGDSSYEFFC) contribute to the FMN site. Residues 251-465 (QKPYAATLLT…VENNNNFKLP (215 aa)) form the FAD-binding FR-type domain. Residues Thr-339, Gly-373, 403-406 (RLYS), 421-423 (TVG), Tyr-427, and 436-439 (GGAS) each bind FAD. Residues 536-537 (SR), 542-546 (KVYVQ), and Asp-578 contribute to the NADP(+) site. Residue Tyr-616 participates in FAD binding.

The protein belongs to the NADPH-dependent sulphite reductase flavoprotein subunit CysJ family. This sequence in the N-terminal section; belongs to the flavodoxin family. In the C-terminal section; belongs to the flavoprotein pyridine nucleotide cytochrome reductase family. As to quaternary structure, alpha(8)-beta(8). The alpha component is a flavoprotein, the beta component is a hemoprotein. FAD is required as a cofactor. The cofactor is FMN.

The catalysed reaction is hydrogen sulfide + 3 NADP(+) + 3 H2O = sulfite + 3 NADPH + 4 H(+). The protein operates within sulfur metabolism; hydrogen sulfide biosynthesis; hydrogen sulfide from sulfite (NADPH route): step 1/1. In terms of biological role, component of the sulfite reductase complex that catalyzes the 6-electron reduction of sulfite to sulfide. This is one of several activities required for the biosynthesis of L-cysteine from sulfate. The flavoprotein component catalyzes the electron flow from NADPH -&gt; FAD -&gt; FMN to the hemoprotein component. The protein is Sulfite reductase [NADPH] flavoprotein alpha-component of Vibrio vulnificus (strain CMCP6).